We begin with the raw amino-acid sequence, 337 residues long: Ketol-acid reductoisomerase (NADP(+)) (337 aa).

The region spanning 3–183 is the KARI N-terminal Rossmann domain; sequence VEMFYDADAD…GGARAGVIKT (181 aa). NADP(+)-binding positions include 26–29, K49, S52, S54, and 84–87; these read YGSQ and DTAQ. Residue H109 is part of the active site. G135 is an NADP(+) binding site. In terms of domain architecture, KARI C-terminal knotted spans 184–329; that stretch reads TFKDETETDL…KKLRDLMSWV (146 aa). Mg(2+)-binding residues include D192, E196, E228, and E232. S253 contacts substrate.

The protein belongs to the ketol-acid reductoisomerase family. It depends on Mg(2+) as a cofactor.

The enzyme catalyses (2R)-2,3-dihydroxy-3-methylbutanoate + NADP(+) = (2S)-2-acetolactate + NADPH + H(+). It carries out the reaction (2R,3R)-2,3-dihydroxy-3-methylpentanoate + NADP(+) = (S)-2-ethyl-2-hydroxy-3-oxobutanoate + NADPH + H(+). The protein operates within amino-acid biosynthesis; L-isoleucine biosynthesis; L-isoleucine from 2-oxobutanoate: step 2/4. It functions in the pathway amino-acid biosynthesis; L-valine biosynthesis; L-valine from pyruvate: step 2/4. Its function is as follows. Involved in the biosynthesis of branched-chain amino acids (BCAA). Catalyzes an alkyl-migration followed by a ketol-acid reduction of (S)-2-acetolactate (S2AL) to yield (R)-2,3-dihydroxy-isovalerate. In the isomerase reaction, S2AL is rearranged via a Mg-dependent methyl migration to produce 3-hydroxy-3-methyl-2-ketobutyrate (HMKB). In the reductase reaction, this 2-ketoacid undergoes a metal-dependent reduction by NADPH to yield (R)-2,3-dihydroxy-isovalerate. This Mycolicibacterium gilvum (strain PYR-GCK) (Mycobacterium gilvum (strain PYR-GCK)) protein is Ketol-acid reductoisomerase (NADP(+)).